A 450-amino-acid chain; its full sequence is Chromosomal replication initiator protein DnaA (450 aa).

A domain I, interacts with DnaA modulators region spans residues 1–79 (MENIHDLWNR…TGEELLIKFI (79 aa)). The interval 79–111 (ITPPNQSEDDFEFQRSSKKHRKPYEESTDFPQS) is domain II. Residues 112 to 328 (MLNPKYTFDT…GALIRVVAYS (217 aa)) form a domain III, AAA+ region region. Residues Gly156, Gly158, Lys159, and Thr160 each contribute to the ATP site. A domain IV, binds dsDNA region spans residues 329 to 450 (SLINKEITAD…KEIEEKLKQL (122 aa)).

Belongs to the DnaA family. As to quaternary structure, oligomerizes as a right-handed, spiral filament on DNA at oriC.

Its subcellular location is the cytoplasm. Plays an essential role in the initiation and regulation of chromosomal replication. ATP-DnaA binds to the origin of replication (oriC) to initiate formation of the DNA replication initiation complex once per cell cycle. Binds the DnaA box (a 9 base pair repeat at the origin) and separates the double-stranded (ds)DNA. Forms a right-handed helical filament on oriC DNA; dsDNA binds to the exterior of the filament while single-stranded (ss)DNA is stabiized in the filament's interior. The ATP-DnaA-oriC complex binds and stabilizes one strand of the AT-rich DNA unwinding element (DUE), permitting loading of DNA polymerase. After initiation quickly degrades to an ADP-DnaA complex that is not apt for DNA replication. Binds acidic phospholipids. The polypeptide is Chromosomal replication initiator protein DnaA (Geobacillus sp. (strain WCH70)).